The primary structure comprises 77 residues: Small ribosomal subunit protein uS4 (77 aa).

Residues 45–77 (PFGGGRPGRVKRKNQKAAAKKASGGDGDEEDEE) form a disordered region. The span at 52 to 63 (GRVKRKNQKAAA) shows a compositional bias: basic residues.

It belongs to the universal ribosomal protein uS4 family.

The chain is Small ribosomal subunit protein uS4 (RPS9) from Nicotiana tabacum (Common tobacco).